Consider the following 328-residue polypeptide: tRNA uridine(34) hydroxylase (328 aa).

The region spanning 130–224 (LDEDTVVLDT…YGKDPEVQGE (95 aa)) is the Rhodanese domain. Cysteine 184 serves as the catalytic Cysteine persulfide intermediate.

It belongs to the TrhO family.

It carries out the reaction uridine(34) in tRNA + AH2 + O2 = 5-hydroxyuridine(34) in tRNA + A + H2O. Functionally, catalyzes oxygen-dependent 5-hydroxyuridine (ho5U) modification at position 34 in tRNAs. The sequence is that of tRNA uridine(34) hydroxylase from Streptococcus pyogenes serotype M49 (strain NZ131).